The chain runs to 823 residues: Zygotic DNA replication licensing factor mcm6-A (823 aa).

The C4-type zinc finger occupies 159–186 (CLDCQTLVRDVEQQFKYTQPSICRNPVC). An MCM domain is found at 347–554 (LYHNLCTSLF…TDYAIARRIV (208 aa)). 397 to 404 (GDPSTAKS) is a binding site for ATP. Positions 529-532 (SRFD) match the Arginine finger motif. The tract at residues 663–710 (PDVNLDQDDEHEPEDETQEGTNGDAEVPNGVNGHVNGINGHSQESNAA) is disordered. Acidic residues predominate over residues 667-680 (LDQDDEHEPEDETQ). Residues 691 to 703 (NGVNGHVNGINGH) show a composition bias toward low complexity.

Belongs to the MCM family. Component of the mcm2-7 complex (RLF-M). The complex forms a toroidal hexameric ring with the proposed subunit order mcm2-mcm6-mcm4-mcm7-mcm3-mcm5 (By simililarity). Begins to associate with zmcm3, mcm4 and mcm7 into mcm complexes at the neurula stage. May replace mmcm6 in the complex that functions during licensing of DNA replication.

Its subcellular location is the nucleus. It carries out the reaction ATP + H2O = ADP + phosphate + H(+). Its function is as follows. Acts as a component of the mcm2-7 complex (mcm complex) which is the putative replicative helicase essential for 'once per cell cycle' DNA replication initiation and elongation in eukaryotic cells. The active ATPase sites in the mcm2-7 ring are formed through the interaction surfaces of two neighboring subunits such that a critical structure of a conserved arginine finger motif is provided in trans relative to the ATP-binding site of the Walker A box of the adjacent subunit. The six ATPase active sites, however, are likely to contribute differentially to the complex helicase activity. The existence of maternal and zygotic forms of mcm3 and mcm6 suggests that specific forms of mcm2-7 complexes may be used during different stages of development. May replace mmcm6 in the mcm2-7 complex. The chain is Zygotic DNA replication licensing factor mcm6-A (zmcm6-a) from Xenopus laevis (African clawed frog).